The chain runs to 664 residues: Ent-copalyl diphosphate synthase 5 (664 aa).

Position 101 (Lys101) interacts with substrate. The Mg(2+) site is built by Asp233 and Asp235. Positions 233 to 236 match the DXDD motif motif; sequence DIDD. Residue Lys320 coordinates substrate.

It belongs to the terpene synthase family. Tpsc subfamily. It depends on Mg(2+) as a cofactor. As to expression, ubiquitous expression in roots, stems, leaves and flowers.

The protein localises to the plastid. Its subcellular location is the chloroplast. It carries out the reaction (2E,6E,10E)-geranylgeranyl diphosphate = ent-copalyl diphosphate. It functions in the pathway secondary metabolite biosynthesis; terpenoid biosynthesis. In terms of biological role, involved in the biosynthesis of ent-kaurene diterpenoids natural products such as oridonin, miltiradiene, eriocalyxin B and nezukol, known to exhibit antitumor, anti-inflammatory and antibacterial activities. Catalyzes the conversion of (2E,6E,10E)-geranylgeranyl diphosphate (GGPP) to ent-copalyl diphosphate (ent-CPP). The chain is Ent-copalyl diphosphate synthase 5 from Isodon rubescens (Rabdosia rubescens).